Consider the following 134-residue polypeptide: MALKIRLARAGSKKRPYYHVVVADVRAPRDGRFIETVGSWNPVLPKDAERVKLDAERIQHWIAQGAQPTDRVLRFLDQAGIAKRPSRNNPTKGEPGKKAQERLALAKQAEEEAAAKAAEAAAAAAAPAEEAASE.

A disordered region spans residues 79 to 134 (AGIAKRPSRNNPTKGEPGKKAQERLALAKQAEEEAAAKAAEAAAAAAAPAEEAASE). The span at 115 to 134 (AKAAEAAAAAAAPAEEAASE) shows a compositional bias: low complexity.

It belongs to the bacterial ribosomal protein bS16 family.

This Brucella canis (strain ATCC 23365 / NCTC 10854 / RM-666) protein is Small ribosomal subunit protein bS16.